We begin with the raw amino-acid sequence, 128 residues long: MRFCLVFIRLAAFVILSGGATSTTTDNDDTRLLQTSNIETAAVANVLHVMQSSESSKRLLRLNDQADISGHDEERSSLIEKGWKKLRKLIKKVWKYVKKPFKKTAKIIKKPFKSRTKNIHIVYYKSRF.

Positions 1-22 (MRFCLVFIRLAAFVILSGGATS) are cleaved as a signal peptide. Positions 58–75 (RLLRLNDQADISGHDEER) match the RxLR-dEER motif.

This sequence belongs to the RxLR effector family.

The protein localises to the secreted. It localises to the host cell membrane. It is found in the host nucleus. Functionally, secreted effector that suppresses pattern-triggered immunity (PTI) in plant host. In Plasmopara halstedii (Downy mildew of sunflower), this protein is Secreted RxLR effector protein RXLR-C09.